Here is a 150-residue protein sequence, read N- to C-terminus: Large ribosomal subunit protein uL13 (150 aa).

Belongs to the universal ribosomal protein uL13 family. Part of the 50S ribosomal subunit.

This protein is one of the early assembly proteins of the 50S ribosomal subunit, although it is not seen to bind rRNA by itself. It is important during the early stages of 50S assembly. The polypeptide is Large ribosomal subunit protein uL13 (Sulfurihydrogenibium sp. (strain YO3AOP1)).